Consider the following 81-residue polypeptide: D-alanyl carrier protein (81 aa).

Residues 1–81 form the Carrier domain; it reads MADEAIKNGV…KIIAKVEQAQ (81 aa). Ser-39 is subject to O-(pantetheine 4'-phosphoryl)serine.

The protein belongs to the DltC family. 4'-phosphopantetheine is transferred from CoA to a specific serine of apo-DCP.

The protein resides in the cytoplasm. The protein operates within cell wall biogenesis; lipoteichoic acid biosynthesis. Carrier protein involved in the D-alanylation of lipoteichoic acid (LTA). The loading of thioester-linked D-alanine onto DltC is catalyzed by D-alanine--D-alanyl carrier protein ligase DltA. The DltC-carried D-alanyl group is further transferred to cell membrane phosphatidylglycerol (PG) by forming an ester bond, probably catalyzed by DltD. D-alanylation of LTA plays an important role in modulating the properties of the cell wall in Gram-positive bacteria, influencing the net charge of the cell wall. The polypeptide is D-alanyl carrier protein (Lacticaseibacillus rhamnosus (Lactobacillus rhamnosus)).